Reading from the N-terminus, the 233-residue chain is Translation initiation factor 6 (233 aa).

It belongs to the eIF-6 family.

Its function is as follows. Binds to the 50S ribosomal subunit and prevents its association with the 30S ribosomal subunit to form the 70S initiation complex. The protein is Translation initiation factor 6 of Aeropyrum pernix (strain ATCC 700893 / DSM 11879 / JCM 9820 / NBRC 100138 / K1).